Here is a 298-residue protein sequence, read N- to C-terminus: Protoheme IX farnesyltransferase (298 aa).

Transmembrane regions (helical) follow at residues 23–43 (VTQL…PGLP), 49–69 (LFGT…NCLI), 95–115 (VLSL…HLVN), 117–137 (LTMW…TVIL), 144–164 (NIVI…ASVA), 171–191 (AWVL…ALAL), 234–254 (FMHM…GIFV), and 276–296 (SILY…VGVL).

This sequence belongs to the UbiA prenyltransferase family. Protoheme IX farnesyltransferase subfamily.

It is found in the cell inner membrane. The catalysed reaction is heme b + (2E,6E)-farnesyl diphosphate + H2O = Fe(II)-heme o + diphosphate. The protein operates within porphyrin-containing compound metabolism; heme O biosynthesis; heme O from protoheme: step 1/1. In terms of biological role, converts heme B (protoheme IX) to heme O by substitution of the vinyl group on carbon 2 of heme B porphyrin ring with a hydroxyethyl farnesyl side group. In Bordetella avium (strain 197N), this protein is Protoheme IX farnesyltransferase.